A 72-amino-acid polypeptide reads, in one-letter code: UPF0270 protein YheU (72 aa).

The protein belongs to the UPF0270 family.

The chain is UPF0270 protein YheU from Escherichia coli (strain UTI89 / UPEC).